Consider the following 274-residue polypeptide: Centriolar and ciliogenesis-associated protein hyls-1 (274 aa).

Disordered regions lie at residues 156–188 (RSSV…SSRP) and 255–274 (NNED…PYID). Polar residues predominate over residues 171 to 183 (VGLSTETEQSELQ). The segment covering 257 to 274 (EDWKANHDKDWSPRPYID) has biased composition (basic and acidic residues).

This sequence belongs to the HYLS1 family. Interacts with sas-4; leading to its localization into newly forming centrioles.

Its subcellular location is the cytoplasm. The protein resides in the cytoskeleton. It localises to the microtubule organizing center. The protein localises to the centrosome. It is found in the centriole. Its subcellular location is the cell projection. The protein resides in the cilium. Its function is as follows. Plays an important role in ciliogenesis. The sequence is that of Centriolar and ciliogenesis-associated protein hyls-1 from Caenorhabditis elegans.